Reading from the N-terminus, the 37-residue chain is Large ribosomal subunit protein bL36 (37 aa).

The protein belongs to the bacterial ribosomal protein bL36 family.

The polypeptide is Large ribosomal subunit protein bL36 (Variovorax paradoxus (strain S110)).